The following is a 249-amino-acid chain: 1-(5-phosphoribosyl)-5-[(5-phosphoribosylamino)methylideneamino] imidazole-4-carboxamide isomerase (249 aa).

Catalysis depends on Asp8, which acts as the Proton acceptor. Asp130 (proton donor) is an active-site residue.

Belongs to the HisA/HisF family.

Its subcellular location is the cytoplasm. It catalyses the reaction 1-(5-phospho-beta-D-ribosyl)-5-[(5-phospho-beta-D-ribosylamino)methylideneamino]imidazole-4-carboxamide = 5-[(5-phospho-1-deoxy-D-ribulos-1-ylimino)methylamino]-1-(5-phospho-beta-D-ribosyl)imidazole-4-carboxamide. The protein operates within amino-acid biosynthesis; L-histidine biosynthesis; L-histidine from 5-phospho-alpha-D-ribose 1-diphosphate: step 4/9. The polypeptide is 1-(5-phosphoribosyl)-5-[(5-phosphoribosylamino)methylideneamino] imidazole-4-carboxamide isomerase (Nitrosococcus oceani (strain ATCC 19707 / BCRC 17464 / JCM 30415 / NCIMB 11848 / C-107)).